Consider the following 329-residue polypeptide: Serine dehydratase-like (329 aa).

N-acetylmethionine is present on M1. The residue at position 48 (K48) is an N6-(pyridoxal phosphate)lysine.

The protein belongs to the serine/threonine dehydratase family. As to quaternary structure, monomer. Homodimer. Pyridoxal 5'-phosphate serves as cofactor.

It catalyses the reaction L-serine = pyruvate + NH4(+). It carries out the reaction L-threonine = 2-oxobutanoate + NH4(+). The enzyme catalyses L-glutamate = D-glutamate. Its activity is regulated as follows. Serine dehydratase activity is inhibited by manganese chloride, ferrous chloride, cobalt chloride, cupric chloride, nickel chloride and zinc chloride. Glutamate racemase activity is inhibited by manganese chloride, ferrous chloride, cupric chloride and zinc chloride. Catalyzes the pyridoxal-phosphate-dependent dehydrative deamination of L-threonine and L-serine to ammonia and alpha-ketobutyrate and pyruvate, respectively. Also exhibits racemase activity towards L-glutamate and D-glutamate. The polypeptide is Serine dehydratase-like (Sdsl) (Rattus norvegicus (Rat)).